Here is a 118-residue protein sequence, read N- to C-terminus: MKGADRHFYIVPVGGETTVDFFEWRLVKGYLFSDFSVLYIPALAKESSIVTSAALALTRRDCKADLAQFMDGARNLTVTNGESPNSDWMFEYLSKLCLNVSRLTGSGRGETVYWEEER.

This chain is Protein LH1, found in Snake adenovirus serotype 1 (SnAdV-1).